The following is a 175-amino-acid chain: Thioredoxin-like protein CITRX, chloroplastic (175 aa).

The N-terminal 64 residues, 1–64 (MQAASLAFHP…KPPAVGKYVR (64 aa)), are a transit peptide targeting the chloroplast. Residues 74–175 (AKEIQELIKG…MMRDIIDNDL (102 aa)) enclose the Thioredoxin domain. Active-site nucleophile residues include Cys98 and Cys101. A disulfide bond links Cys98 and Cys101.

Belongs to the thioredoxin family. Plant CITRX-type subfamily. As to quaternary structure, interacts with Cf-9 resistance protein.

It localises to the plastid. The protein localises to the chloroplast. Functionally, probable thiol-disulfide oxidoreductase that may play a role in proper chloroplast development. This is Thioredoxin-like protein CITRX, chloroplastic from Solanum lycopersicum (Tomato).